Here is a 213-residue protein sequence, read N- to C-terminus: StAR-related lipid transfer protein 5 (213 aa).

An START domain is found at 1–213 (MDPALAAQMS…LQKAVKQFHE (213 aa)).

May be involved in the intracellular transport of sterols or other lipids. May bind cholesterol or other sterols. The protein is StAR-related lipid transfer protein 5 (STARD5) of Pongo abelii (Sumatran orangutan).